Here is a 156-residue protein sequence, read N- to C-terminus: Small ribosomal subunit protein uS7c (156 aa).

It belongs to the universal ribosomal protein uS7 family. Part of the 30S ribosomal subunit.

Its subcellular location is the plastid. Functionally, one of the primary rRNA binding proteins, it binds directly to 16S rRNA where it nucleates assembly of the head domain of the 30S subunit. The chain is Small ribosomal subunit protein uS7c (rps7) from Prototheca wickerhamii.